We begin with the raw amino-acid sequence, 1550 residues long: Adhesion G protein-coupled receptor L3 (1550 aa).

A signal peptide spans 1-19 (MCPPQLFILMMLLAPVVHG). The Extracellular segment spans residues 20–948 (GKHNERHPAL…VHDLLLDVIT (929 aa)). A disordered region spans residues 34 to 80 (RHAEHSPGGPLPPRHLLQQPAAERSTAHRGQGPRGTARGVRGPGAPG). Positions 103–192 (SCESYPIELR…KYLEVQYECV (90 aa)) constitute an SUEL-type lectin domain. Intrachain disulfides connect Cys-104–Cys-134, Cys-113–Cys-191, Cys-146–Cys-178, Cys-159–Cys-165, and Cys-203–Cys-385. Residue Asn-161 is glycosylated (N-linked (GlcNAc...) asparagine). The Olfactomedin-like domain maps to 202–461 (LCPGLLKGVY…VVKYSLDFGP (260 aa)). An interaction with FLRT3 region spans residues 317-347 (YHDTSPYRWGGKSDIDLAVDENGLWVIYATE). The Ca(2+) site is built by Asp-332, Asn-380, Ala-381, and Val-435. The tract at residues 518–538 (NLGRSTTPSLPGRRNRSTSTP) is disordered. Asn-532, Asn-616, Asn-839, Asn-884, and Asn-910 each carry an N-linked (GlcNAc...) asparagine glycan. Positions 755 to 934 (DIVRENTDNI…AVLMAHVEVK (180 aa)) constitute a GAIN-B domain. 2 disulfides stabilise this stretch: Cys-885–Cys-916 and Cys-904–Cys-918. Residues 885-934 (CSFWSYSKRTMTGYWSTQGCRLLTTNKTHTTCSCNHLTNFAVLMAHVEVK) are GPS. Residues 922 to 938 (TNFAVLMAHVEVKHSDA) are stachel. Residues 949–969 (WVGILLSLVCLLICIFTFCFF) traverse the membrane as a helical segment. Over 970-977 (RGLQSDRN) the chain is Cytoplasmic. Residues 978–998 (TIHKNLCISLFVAELLFLIGI) traverse the membrane as a helical segment. Asn-999 is a glycosylation site (N-linked (GlcNAc...) asparagine). The Extracellular portion of the chain corresponds to 999–1006 (NRTDQPIA). The chain crosses the membrane as a helical span at residues 1007-1027 (CAVFAALLHFFFLAAFTWMFL). Residues 1028–1048 (EGVQLYIMLVEVFESEHSRRK) lie on the Cytoplasmic side of the membrane. A helical transmembrane segment spans residues 1049 to 1069 (YFYLVGYGMPALIVAVSAAVD). The Extracellular segment spans residues 1070 to 1087 (YRSYGTDKVCWLRLDTYF). The helical transmembrane segment at 1088 to 1108 (IWSFIGPATLIIMLNVIFLGI) threads the bilayer. Residues 1109 to 1141 (ALYKMFHHTAILKPESGCLDNINYEDNRPFIKS) lie on the Cytoplasmic side of the membrane. The helical transmembrane segment at 1142-1162 (WVIGAIALLCLLGLTWAFGLM) threads the bilayer. Topologically, residues 1163–1168 (YINEST) are extracellular. The N-linked (GlcNAc...) asparagine glycan is linked to Asn-1165. Residues 1169–1189 (VIMAYLFTIFNSLQGMFIFIF) form a helical membrane-spanning segment. Residues 1190–1550 (HCVLQKKVRK…KGPAHLVTSL (361 aa)) lie on the Cytoplasmic side of the membrane. Positions 1213–1236 (KSTESSIGSGKTSGSRTPGRYSTG) are disordered. The residue at position 1253 (Ser-1253) is a Phosphoserine. Disordered regions lie at residues 1410–1435 (LLPP…PQDH) and 1528–1550 (PPNK…VTSL). Residue Ser-1535 is modified to Phosphoserine. Positions 1545–1550 (HLVTSL) match the PDZ-binding motif.

This sequence belongs to the G-protein coupled receptor 2 family. LN-TM7 subfamily. Heterodimer of 2 chains generated by proteolytic processing; the large extracellular N-terminal fragment and the membrane-bound C-terminal fragment predominantly remain associated and non-covalently linked. Interacts (via olfactomedin-like domain) with FLRT1 (via extracellular domain). Interacts (via olfactomedin-like domain) with FLRT2 (via extracellular domain). Interacts (via olfactomedin-like domain) with FLRT3 (via extracellular domain); the interaction is direct. Interacts (via extracellular domain) with TENM1. Interacts (via extracellular domain) with TENM2. Interacts (via extracellular domain) with TENM3. Identified in a complex with FLRT3 and UNC5B; does not interact with UNC5B by itself. Identified in a complex with FLRT3 and UNC5D; does not interact with UNC5D by itself. In terms of assembly, interacts (via PDZ-binding motif) with SHANK3. Interacts (via PDZ-binding motif) with DLG4. Post-translationally, autoproteolytically processed at the GPS region of the GAIN-B domain; this cleavage modulates receptor activity. In terms of tissue distribution, predominantly expressed in brain, followed by heart, placenta, pancreas, kidney and testis.

It localises to the cell membrane. The protein resides in the postsynaptic cell membrane. The protein localises to the cell projection. Its subcellular location is the axon. It is found in the cell junction. With respect to regulation, forms a heterodimer of 2 chains generated by proteolytic processing that remain associated through non-covalent interactions mediated by the GAIN-B domain. In the inactivated receptor, the Stachel sequence (also named stalk) is embedded in the GAIN-B domain, where it adopts a beta-strand conformation. On activation, the Stachel moves into the 7 transmembrane region and adopts a twisted hook-shaped configuration that forms contacts within the receptor, leading to coupling of a G-alpha protein, which activates signaling. The cleaved GAIN-B and N-terminal domains can then dissociate from the rest of the receptor. Orphan adhesion G-protein coupled receptor (aGPCR), which mediates synapse specificity. Ligand binding causes a conformation change that triggers signaling via guanine nucleotide-binding proteins (G proteins) and modulates the activity of downstream effectors. ADGRL3 is coupled with different classes of G alpha proteins, such as G(12)/G(13), G(s), G(i) or G(q), depending on the context. Coupling to G(12)/G(13) G proteins, which mediates the activation Rho small GTPases is the most efficient. Following G-protein coupled receptor activation, associates with cell adhesion molecules that are expressed at the surface of adjacent cells to direct synapse specificity. Specifically mediates the establishment of Schaffer-collateral synapses formed by CA3-region axons on CA1-region pyramidal neurons in the hippocampus. Localizes to postsynaptic spines in excitatory synapses in the S.oriens and S.radiatum and interacts with presynaptic cell adhesion molecules FLRT3 and TENM2, promoting synapse formation. Plays a role in the development of glutamatergic synapses in the cortex. Important in determining the connectivity rates between the principal neurons in the cortex. In terms of biological role, orphan adhesion G-protein coupled receptor (aGPCR), which mediates synapse specificity. Ligand binding causes a conformation change that triggers signaling via guanine nucleotide-binding proteins (G proteins) and modulates the activity of downstream effectors, such as adenylate cyclase. Isoform 1 is specifically coupled to G(s) G proteins and mediates activation of adenylate cyclase activity. Following G-protein coupled receptor activation, undergoes liquid-liquid phase transition, associates with (1) cell adhesion molecules that are expressed at the surface of adjacent cells, as well as (2) PDZ-containing proteins, such as SHANK3 and DLG4, in the cytoplasm to direct synapse formation. The protein is Adhesion G protein-coupled receptor L3 of Rattus norvegicus (Rat).